A 411-amino-acid polypeptide reads, in one-letter code: Protein phosphatase 1 regulatory subunit 36 (411 aa).

As to quaternary structure, interacts with PPP1CA.

Its function is as follows. Inhibits phosphatase activity of protein phosphatase 1 (PP1) complexes. In Rattus norvegicus (Rat), this protein is Protein phosphatase 1 regulatory subunit 36 (Ppp1r36).